The following is a 322-amino-acid chain: Ribokinase (322 aa).

Substrate contacts are provided by residues 25-27 (MTD), 53-57 (GKGAN), and E154. ATP-binding positions include N199, 235–240 (TLGAEG), and T256. K(+)-binding residues include D263 and T265. Residues 268 to 269 (GD) and N295 contribute to the ATP site. D269 serves as a coordination point for substrate. The active-site Proton acceptor is the D269. K(+) contacts are provided by S301, A304, G306, and S310.

This sequence belongs to the carbohydrate kinase PfkB family. Ribokinase subfamily. In terms of assembly, homodimer. The cofactor is Mg(2+).

The protein resides in the cytoplasm. The protein localises to the nucleus. The enzyme catalyses D-ribose + ATP = D-ribose 5-phosphate + ADP + H(+). The protein operates within carbohydrate metabolism; D-ribose degradation; D-ribose 5-phosphate from beta-D-ribopyranose: step 2/2. Its activity is regulated as follows. Activated by a monovalent cation that binds near, but not in, the active site. The most likely occupant of the site in vivo is potassium. Ion binding induces a conformational change that may alter substrate affinity. Competitively inhibited by phosphonoacetic acid, etidronate, 2-carboxethylphosphonic acid, N-(phosphonomethyl)glycine, N-(phosphonomethyl)iminodiacetic acid and clodronate. Catalyzes the phosphorylation of ribose at O-5 in a reaction requiring ATP and magnesium. The resulting D-ribose-5-phosphate can then be used either for sythesis of nucleotides, histidine, and tryptophan, or as a component of the pentose phosphate pathway. This chain is Ribokinase, found in Homo sapiens (Human).